The following is a 247-amino-acid chain: ATP synthase subunit a, chloroplastic (247 aa).

5 helical membrane passes run 38–58 (QVLI…TVAV), 95–115 (VPFI…GALL), 134–154 (INTT…AGLT), 199–219 (LVVV…VMFL), and 220–240 (GLFT…AYIG).

Belongs to the ATPase A chain family. F-type ATPases have 2 components, CF(1) - the catalytic core - and CF(0) - the membrane proton channel. CF(1) has five subunits: alpha(3), beta(3), gamma(1), delta(1), epsilon(1). CF(0) has four main subunits: a, b, b' and c.

The protein localises to the plastid. It is found in the chloroplast thylakoid membrane. Functionally, key component of the proton channel; it plays a direct role in the translocation of protons across the membrane. This Acorus calamus var. americanus (American sweet flag) protein is ATP synthase subunit a, chloroplastic.